The sequence spans 434 residues: Beta-enolase (434 aa).

At Ala2 the chain carries N-acetylalanine. Thr72 is subject to Phosphothreonine. Residues Ser83 and Ser157 each carry the phosphoserine modification. Substrate contacts are provided by His158 and Glu167. At Ser176 the chain carries Phosphoserine. Residue Thr205 is modified to Phosphothreonine. Glu210 acts as the Proton donor in catalysis. The residue at position 229 (Thr229) is a Phosphothreonine. At Tyr236 the chain carries Phosphotyrosine. Asp245 contributes to the Mg(2+) binding site. Residue Ser263 is modified to Phosphoserine. Positions 293 and 318 each coordinate substrate. Glu293 and Asp318 together coordinate Mg(2+). The active-site Proton acceptor is Lys343. Residues Ser370–Ser373 and Lys394 contribute to the substrate site.

Belongs to the enolase family. In terms of assembly, mammalian enolase is composed of 3 isozyme subunits, alpha, beta and gamma, which can form homodimers or heterodimers which are cell-type and development-specific. Interacts with PNKD. Mg(2+) serves as cofactor. The alpha/alpha homodimer is expressed in embryo and in most adult tissues. The alpha/beta heterodimer and the beta/beta homodimer are found in striated muscle, and the alpha/gamma heterodimer and the gamma/gamma homodimer in neurons.

It localises to the cytoplasm. The catalysed reaction is (2R)-2-phosphoglycerate = phosphoenolpyruvate + H2O. The protein operates within carbohydrate degradation; glycolysis; pyruvate from D-glyceraldehyde 3-phosphate: step 4/5. In terms of biological role, glycolytic enzyme that catalyzes the conversion of 2-phosphoglycerate to phosphoenolpyruvate. Appears to have a function in striated muscle development and regeneration. The polypeptide is Beta-enolase (Eno3) (Rattus norvegicus (Rat)).